The sequence spans 429 residues: UDP-N-acetylglucosamine 1-carboxyvinyltransferase (429 aa).

22-23 (KN) lines the phosphoenolpyruvate pocket. A UDP-N-acetyl-alpha-D-glucosamine-binding site is contributed by R102. C126 acts as the Proton donor in catalysis. C126 is subject to 2-(S-cysteinyl)pyruvic acid O-phosphothioketal. Residues 131–135 (RPVDL), D316, and I338 each bind UDP-N-acetyl-alpha-D-glucosamine.

The protein belongs to the EPSP synthase family. MurA subfamily.

The protein resides in the cytoplasm. The catalysed reaction is phosphoenolpyruvate + UDP-N-acetyl-alpha-D-glucosamine = UDP-N-acetyl-3-O-(1-carboxyvinyl)-alpha-D-glucosamine + phosphate. Its pathway is cell wall biogenesis; peptidoglycan biosynthesis. Cell wall formation. Adds enolpyruvyl to UDP-N-acetylglucosamine. This is UDP-N-acetylglucosamine 1-carboxyvinyltransferase from Methylobacterium sp. (strain 4-46).